Consider the following 665-residue polypeptide: Long chain acyl-CoA synthetase 2 (665 aa).

Position 228-239 (228-239) interacts with ATP; sequence IMYTSGTTGEPK. Residues 496-520 form a fatty acid-binding region; sequence DGWFHTGDIGEWQEDGSMKIIDRKK.

Belongs to the ATP-dependent AMP-binding enzyme family. Requires Mg(2+) as cofactor. Expressed along the entire length of the stem, but expression was not entirely epidermal specific, with some expression found in internal cell layers as well. Was expressed in leave epidermal cells, flowers (sepals, petals, stamens, filaments and carpel), siliques and developing seeds. In roots, expression was detected in an internal cell layer, probably the endodermal layer.

Its subcellular location is the endoplasmic reticulum. The catalysed reaction is a long-chain fatty acid + ATP + CoA = a long-chain fatty acyl-CoA + AMP + diphosphate. Its pathway is lipid metabolism; fatty acid metabolism. Functionally, activation of long-chain fatty acids for both synthesis of cellular lipids, and degradation via beta-oxidation. Acts in the cutin pathway. Preferentially uses palmitate, palmitoleate, oleate and linoleate. Required for repression of lateral root formation through its role in cutin biosynthesis and subsequent aerial tissues permeability. This is Long chain acyl-CoA synthetase 2 (LACS2) from Arabidopsis thaliana (Mouse-ear cress).